The following is a 61-amino-acid chain: uncharacterized protein (61 aa).

This is an uncharacterized protein from Dictyostelium discoideum (Social amoeba).